Reading from the N-terminus, the 960-residue chain is RNA polymerase II subunit A C-terminal domain phosphatase (960 aa).

M1 is modified (N-acetylmethionine). The FCP1 homology domain occupies 178–341 (HRNRKLVLMV…PPAARETQAR (164 aa)). The interval 331-580 (APPAARETQA…EEDTDDDDHL (250 aa)) is disordered. The span at 439-448 (PGVQPTQGDA) shows a compositional bias: polar residues. Over residues 453 to 463 (LDFDLSSDSES) the composition is skewed to acidic residues. Phosphoserine is present on S530. Residues 547 to 556 (ESQNSEQSGV) show a composition bias toward polar residues. Acidic residues predominate over residues 566–578 (VGEEEEEDTDDDD). In terms of domain architecture, BRCT spans 619-718 (LKSKVLADVA…DKVEEQLFPL (100 aa)). Residues S664 and S730 each carry the phosphoserine modification. At K770 the chain carries N6-acetyllysine. 2 disordered regions span residues 770–834 (KLIR…MSEA) and 854–948 (DILG…ADEM). 3 positions are modified to phosphoserine: S830, S860, and S863. Positions 854–864 (DILGEGSDDSD) are enriched in acidic residues. A compositionally biased stretch (basic and acidic residues) spans 865 to 881 (IEKKKPEDQDNEQERAP). Acidic residues predominate over residues 934-947 (SNDDEEGSSSEADE).

In terms of assembly, homodimer. Interacts with GTF2F1. Interacts with WDR77, SNRPB and SNRNP70. Post-translationally, phosphorylated. In the presence of TFIIF, the phosphorylated form has an increased CTD phosphatase activity. The phosphorylation is required for the physical interaction with GTF2F1.

It localises to the nucleus. Its subcellular location is the cytoplasm. The protein resides in the cytoskeleton. The protein localises to the microtubule organizing center. It is found in the centrosome. It localises to the spindle. Its subcellular location is the spindle pole. The protein resides in the midbody. The catalysed reaction is O-phospho-L-seryl-[protein] + H2O = L-seryl-[protein] + phosphate. It catalyses the reaction O-phospho-L-threonyl-[protein] + H2O = L-threonyl-[protein] + phosphate. In terms of biological role, processively dephosphorylates 'Ser-2' and 'Ser-5' of the heptad repeats YSPTSPS in the C-terminal domain of the largest RNA polymerase II subunit. This promotes the activity of RNA polymerase II. Plays a role in the exit from mitosis by dephosphorylating crucial mitotic substrates (USP44, CDC20 and WEE1) that are required for M-phase-promoting factor (MPF)/CDK1 inactivation. This is RNA polymerase II subunit A C-terminal domain phosphatase (Ctdp1) from Mus musculus (Mouse).